We begin with the raw amino-acid sequence, 591 residues long: MKKISLPKIGIRPVIDGRRMGVRESLEEQTMNMAKATAALITEKLRHACGAQIECVIADTCIAGMAESAACEEKFSSQNVGVTITVTPCWCYGSETIDMDPMRPKAIWGFNGTERPGAVYLAAALAAHSQKGIPAFSIYGHDVQDADDTSIPADVEEKLLRFARAGLAVASMKGKSYLSVGGVSMGIAGSIVDHNFFESWLGMKVQAVDMTELRRRIDQKIYDEAELEMALAWADKNFRYGEDQNAQQYKRNEEQSRAVLKESLLMAMCIRDMMQGNNKLAEKGLVEESLGYNAIAAGFQGQRHWTDQYPNGDTAEALLNSSFDWNGVREPFVVATENDSLNGVAMLLGHQLTGTAQVFADVRTYWSPEAVERVTGQPLTGLAEHGIIHLINSGSAALDGSCKQRDSEGKPTMKPHWEISQQEADACLAATEWCPAIHEYFRGGGYSSRFLTEGGVPFTMTRVNIIKGLGPVLQIAEGWSVELPKEMHDQLDARTNSTWPTTWFAPRLTGKGPFTDVYSVMANWGANHGVLTIGHVGADFITLAAMLRIPVCMHNVDDAKIYRPSAWAAHGMDIEGQDYRACQNYGPLYKR.

Catalysis depends on proton acceptor residues Glu-337 and Asp-361. Glu-337, Asp-361, and His-528 together coordinate Mn(2+).

This sequence belongs to the L-fucose isomerase family. In terms of assembly, homohexamer. Mn(2+) is required as a cofactor.

The protein resides in the cytoplasm. It catalyses the reaction L-fucose = L-fuculose. Its pathway is carbohydrate degradation; L-fucose degradation; L-lactaldehyde and glycerone phosphate from L-fucose: step 1/3. Functionally, converts the aldose L-fucose into the corresponding ketose L-fuculose. The protein is L-fucose isomerase of Citrobacter koseri (strain ATCC BAA-895 / CDC 4225-83 / SGSC4696).